The sequence spans 367 residues: 3-dehydroquinate synthase (367 aa).

NAD(+)-binding positions include 72-77 (DGENYK), 106-110 (GVIGD), 130-131 (TT), lysine 143, lysine 152, and 170-173 (FLST). Zn(2+) contacts are provided by glutamate 185, histidine 248, and histidine 265.

The protein belongs to the sugar phosphate cyclases superfamily. Dehydroquinate synthase family. Co(2+) is required as a cofactor. Requires Zn(2+) as cofactor. The cofactor is NAD(+).

The protein localises to the cytoplasm. The catalysed reaction is 7-phospho-2-dehydro-3-deoxy-D-arabino-heptonate = 3-dehydroquinate + phosphate. The protein operates within metabolic intermediate biosynthesis; chorismate biosynthesis; chorismate from D-erythrose 4-phosphate and phosphoenolpyruvate: step 2/7. Functionally, catalyzes the conversion of 3-deoxy-D-arabino-heptulosonate 7-phosphate (DAHP) to dehydroquinate (DHQ). This is 3-dehydroquinate synthase from Buchnera aphidicola subsp. Cinara cedri (strain Cc).